Here is a 444-residue protein sequence, read N- to C-terminus: Methylenetetrahydrofolate--tRNA-(uracil-5-)-methyltransferase TrmFO (444 aa).

9-14 contributes to the FAD binding site; that stretch reads GAGLAG.

It belongs to the MnmG family. TrmFO subfamily. It depends on FAD as a cofactor.

It is found in the cytoplasm. The enzyme catalyses uridine(54) in tRNA + (6R)-5,10-methylene-5,6,7,8-tetrahydrofolate + NADH + H(+) = 5-methyluridine(54) in tRNA + (6S)-5,6,7,8-tetrahydrofolate + NAD(+). The catalysed reaction is uridine(54) in tRNA + (6R)-5,10-methylene-5,6,7,8-tetrahydrofolate + NADPH + H(+) = 5-methyluridine(54) in tRNA + (6S)-5,6,7,8-tetrahydrofolate + NADP(+). In terms of biological role, catalyzes the folate-dependent formation of 5-methyl-uridine at position 54 (M-5-U54) in all tRNAs. The sequence is that of Methylenetetrahydrofolate--tRNA-(uracil-5-)-methyltransferase TrmFO from Koribacter versatilis (strain Ellin345).